The primary structure comprises 1504 residues: DNA-directed RNA polymerase subunit beta' (1504 aa).

Zn(2+) is bound by residues cysteine 60, cysteine 62, cysteine 75, and cysteine 78. Residues 265-294 (RKQRDLEDAEQLTGAERERKEYEASQERER) form a disordered region. The span at 279 to 294 (AERERKEYEASQERER) shows a compositional bias: basic and acidic residues. The Mg(2+) site is built by aspartate 626, aspartate 628, and aspartate 630. Zn(2+)-binding residues include cysteine 1002, cysteine 1075, cysteine 1082, and cysteine 1085. Residues 1468-1504 (RALIGGDGDDGERNNGDFDDQVGEDVVIPPDDDDQEA) form a disordered region.

Belongs to the RNA polymerase beta' chain family. The RNAP catalytic core consists of 2 alpha, 1 beta, 1 beta' and 1 omega subunit. When a sigma factor is associated with the core the holoenzyme is formed, which can initiate transcription. It depends on Mg(2+) as a cofactor. Zn(2+) serves as cofactor.

The enzyme catalyses RNA(n) + a ribonucleoside 5'-triphosphate = RNA(n+1) + diphosphate. Its function is as follows. DNA-dependent RNA polymerase catalyzes the transcription of DNA into RNA using the four ribonucleoside triphosphates as substrates. The protein is DNA-directed RNA polymerase subunit beta' of Roseiflexus sp. (strain RS-1).